Reading from the N-terminus, the 279-residue chain is MADDLGDEWWENQPTGAGSSPEASDGEGEGDTEVMQQETVPVPVPSEKTKQPKECFLIQPKERKENTTKTRKRRKKKITDVLAKSEPKPGLPEDLQKLMKDYYSSRRLVIELEELNLPDSCFLKANDLTHSLSSYLKEICPKWVKLRKNHSEKKSVLMLIICSSAVRALELIRSMTAFRGDGKVIKLFAKHIKVQAQVKLLEKRVVHLGVGTPGRIKELVKQGGLNLSPLKFLVFDWNWRDQKLRRMMDIPEIRKEVFELLEMGVLSLCKSESLKLGLF.

Over residues 1–10 (MADDLGDEWW) the composition is skewed to acidic residues. The segment at 1–89 (MADDLGDEWW…DVLAKSEPKP (89 aa)) is disordered. Positions 12-22 (NQPTGAGSSPE) are enriched in polar residues. Ser19 and Ser24 each carry phosphoserine. At Arg167 the chain carries Omega-N-methylarginine. At Thr212 the chain carries Phosphothreonine.

Belongs to the CMS1 family.

This chain is Protein CMSS1 (CMSS1), found in Homo sapiens (Human).